The chain runs to 479 residues: Ribosomal RNA small subunit methyltransferase F (479 aa).

Residues 125–131, glutamate 149, aspartate 176, and aspartate 194 contribute to the S-adenosyl-L-methionine site; that span reads AAAPGSK. Cysteine 247 serves as the catalytic Nucleophile.

The protein belongs to the class I-like SAM-binding methyltransferase superfamily. RsmB/NOP family.

The protein localises to the cytoplasm. It catalyses the reaction cytidine(1407) in 16S rRNA + S-adenosyl-L-methionine = 5-methylcytidine(1407) in 16S rRNA + S-adenosyl-L-homocysteine + H(+). Specifically methylates the cytosine at position 1407 (m5C1407) of 16S rRNA. The polypeptide is Ribosomal RNA small subunit methyltransferase F (Salmonella arizonae (strain ATCC BAA-731 / CDC346-86 / RSK2980)).